Reading from the N-terminus, the 894-residue chain is Exocyst complex component 1 (894 aa).

2 coiled-coil regions span residues 152–199 (GDEE…LQVL) and 205–259 (QSIM…NHLI). The disordered stretch occupies residues 437 to 495 (SKESKKFATLPRKESAVKQETESLHGSSGKLTGSTSSLNKLSVQSSGSRRSQSSSLLDM). Positions 438–459 (KESKKFATLPRKESAVKQETES) are enriched in basic and acidic residues. Positions 460–491 (LHGSSGKLTGSTSSLNKLSVQSSGSRRSQSSS) are enriched in low complexity. Ser-470 carries the phosphoserine modification. Thr-471 is modified (phosphothreonine). A phosphoserine mark is found at Ser-473, Ser-487, and Ser-501.

Belongs to the SEC3 family. In terms of assembly, the exocyst complex is composed of EXOC1, EXOC2, EXOC3, EXOC4, EXOC5, EXOC6, EXOC7 and EXOC8. Interacts with EEF1A1. Interacts with SLC6A9; interaction increases the transporter capacity of SLC6A9 probably by promoting its insertion into the cell membrane.

The protein localises to the midbody. The protein resides in the midbody ring. Its subcellular location is the cytoplasm. It is found in the perinuclear region. It localises to the cell membrane. Its function is as follows. Component of the exocyst complex involved in the docking of exocytic vesicles with fusion sites on the plasma membrane. The protein is Exocyst complex component 1 (Exoc1) of Mus musculus (Mouse).